Consider the following 295-residue polypeptide: Nitrogenase iron protein 1 (295 aa).

Position 12 to 19 (12 to 19) interacts with ATP; the sequence is GKGGIGKS. Residue Cys-100 participates in [4Fe-4S] cluster binding. Arg-103 carries the post-translational modification ADP-ribosylarginine; by dinitrogenase reductase ADP-ribosyltransferase. A [4Fe-4S] cluster-binding site is contributed by Cys-134.

It belongs to the NifH/BchL/ChlL family. In terms of assembly, homodimer. Requires [4Fe-4S] cluster as cofactor. Post-translationally, the reversible ADP-ribosylation of Arg-103 inactivates the nitrogenase reductase and regulates nitrogenase activity.

It carries out the reaction N2 + 8 reduced [2Fe-2S]-[ferredoxin] + 16 ATP + 16 H2O = H2 + 8 oxidized [2Fe-2S]-[ferredoxin] + 2 NH4(+) + 16 ADP + 16 phosphate + 6 H(+). Its function is as follows. The key enzymatic reactions in nitrogen fixation are catalyzed by the nitrogenase complex, which has 2 components: the iron protein and the molybdenum-iron protein. This Mastigocladus laminosus (Fischerella sp.) protein is Nitrogenase iron protein 1 (nifH1).